The chain runs to 758 residues: Matrix metalloproteinase-2 (758 aa).

Positions 1–17 are cleaved as a signal peptide; that stretch reads MFSKYVLATLLALFAQS. A Zn(2+)-binding site is contributed by His-257. Glu-258 is a catalytic residue. The Zn(2+) site is built by His-261 and His-267. Residues 335-514 are disordered; the sequence is AYWPWNNPSN…HNKPRKPKPD (180 aa). A compositionally biased stretch (low complexity) spans 338–348; the sequence is PWNNPSNNPNN. The segment covering 349–476 has biased composition (basic and acidic residues); that stretch reads DRNRARERQE…EWERRNRNGA (128 aa). Over residues 479 to 494 the composition is skewed to low complexity; it reads PVTPTANTTPRPTNKP. Positions 499–510 are enriched in basic residues; the sequence is HRQHHHHNKPRK. 4 Hemopexin repeats span residues 513 to 561, 565 to 610, 612 to 659, and 660 to 707; these read PDSC…WSAL, LTKV…GLPP, LTHI…WSGV, and GYNI…WMQC. The cysteines at positions 516 and 707 are disulfide-linked. The chain crosses the membrane as a helical span at residues 739-756; the sequence is LRINHFILSILLLAIANW. Over 757 to 758 the chain is Cytoplasmic; that stretch reads RS.

It belongs to the peptidase M10A family. The cofactor is Ca(2+). It depends on Zn(2+) as a cofactor. As to expression, widely expressed during embryogenesis including in the mesoderm, developing gut, central and peripheral nervous systems and imaginal disks. In the embryonic nervous system, expressed in neurons and glia. In third instar larvae, strongly expressed in the morphogenetic furrow of eye imaginal disks and in the optic lobe region of the brain. Expressed in posterior follicle cells in all mature stage 14 follicles but not in earlier follicles and is also expressed in some anterior follicle cells that help form dorsal eggshell structures.

The protein resides in the cell membrane. Its function is as follows. Has metalloproteinase activity. Proteolytically cleaves the PGRP-LC receptor; involved in gut-fat body innate immunological communication (GFIC)-mediated activation of the imd/Relish signal transduction pathway. Required for larval tissue histolysis during metamorphosis and is involved in pupal head eversion and fusion of the wing imaginal tissue. Required for growth of the dorsal air sac primordium and development of the dorsal air sacs. Promotes embryonic motor axon fasciculation. Cleaves and activates frac to promote motor axon bundling during outgrowth. Promotes the reshaping of adult sensory neuron dendrites from a radial to lattice-like shape which occurs after eclosion by degrading the basement membrane on which the dendrites grow. Involved in inhibition of follicle stem cell proliferation by cleaving Dlp, inhibiting its interaction with wg and preventing Dlp-mediated spreading of wg to follicle stem cells to enhance their proliferation. Plays a role in wound healing. Involved in fat body dissociation which occurs during metamorphosis by degrading basement membrane components, leading to destruction of cell-basement membrane junctions. Required for posterior follicle cell degradation and ovulation. The polypeptide is Matrix metalloproteinase-2 (Drosophila melanogaster (Fruit fly)).